Reading from the N-terminus, the 355-residue chain is Type II restriction enzyme CfrBI (355 aa).

It carries out the reaction Endonucleolytic cleavage of DNA to give specific double-stranded fragments with terminal 5'-phosphates.. Its function is as follows. A P subtype restriction enzyme that recognizes the double-stranded sequence 5'-CCWWGG-3' and cleaves after C-1. This Citrobacter freundii protein is Type II restriction enzyme CfrBI.